A 333-amino-acid polypeptide reads, in one-letter code: Ketol-acid reductoisomerase (NAD(P)(+)) (333 aa).

The KARI N-terminal Rossmann domain occupies 2–182 (AKIYYDEDAS…GATRAGVIET (181 aa)). NADP(+) is bound by residues 25 to 28 (YGSQ), Ser-51, and 83 to 86 (DTVQ). His-108 is an active-site residue. Gly-134 is an NADP(+) binding site. In terms of domain architecture, KARI C-terminal knotted spans 183–327 (TFREETETDL…KELRQMMPWL (145 aa)). Residues Asp-191, Glu-195, Glu-227, and Glu-231 each contribute to the Mg(2+) site. Ser-252 is a substrate binding site.

This sequence belongs to the ketol-acid reductoisomerase family. Mg(2+) serves as cofactor.

The enzyme catalyses (2R)-2,3-dihydroxy-3-methylbutanoate + NAD(+) = (2S)-2-acetolactate + NADH + H(+). The catalysed reaction is (2R)-2,3-dihydroxy-3-methylbutanoate + NADP(+) = (2S)-2-acetolactate + NADPH + H(+). It functions in the pathway amino-acid biosynthesis; L-isoleucine biosynthesis; L-isoleucine from 2-oxobutanoate: step 2/4. It participates in amino-acid biosynthesis; L-valine biosynthesis; L-valine from pyruvate: step 2/4. In terms of biological role, involved in the biosynthesis of branched-chain amino acids (BCAA). Catalyzes an alkyl-migration followed by a ketol-acid reduction of (S)-2-acetolactate (S2AL) to yield (R)-2,3-dihydroxy-isovalerate. In the isomerase reaction, S2AL is rearranged via a Mg-dependent methyl migration to produce 3-hydroxy-3-methyl-2-ketobutyrate (HMKB). In the reductase reaction, this 2-ketoacid undergoes a metal-dependent reduction by NADPH or NADH to yield (R)-2,3-dihydroxy-isovalerate. This is Ketol-acid reductoisomerase (NAD(P)(+)) from Hydrogenobaculum sp. (strain Y04AAS1).